The following is a 434-amino-acid chain: MAASDTERDGLAPEKTSPDRDKKKEQSEVSVSPRASKHHYSRSRSRSRERKRKSDNEGRKHRSRSRSKEGRRHESKDKSSKKHKSEEHNDKEHSSDKGRERLNSSENGEDRHKRKERKSSRGRSHSRSRSRERRHRSRSRERKKSRSRSRERKKSRSRSRERKKSRSRSRERKRRIRSRSRSRSRHRHRTRSRSRTRSRSRDRKKRIEKPRRFSRSLSRTPSPPPFRGRNTAMDAQEALARRLERAKKLQEQREKEMVEKQKQQEIAAAAATGGSVLNVAALLASGTQVTPQIAMAAQMAALQAKALAETGIAVPSYYNPAAVNPMKFAEQEKKRKMLWQGKKEGDKSQSAEIWEKLNFGNKDQNVKFRKLMGIKSEDEAGCSSVDEESYKTLKQQEEVFRNLDAQYEMARSQTHTQRGMGLGFTSSMRGMDAV.

Over residues 1–27 (MAASDTERDGLAPEKTSPDRDKKKEQS) the composition is skewed to basic and acidic residues. Residues 1 to 230 (MAASDTERDG…PSPPPFRGRN (230 aa)) are disordered. Residue alanine 2 is modified to N-acetylalanine. Serine 4 bears the Phosphoserine mark. Threonine 6 and threonine 16 each carry phosphothreonine. Serine 17, serine 30, and serine 32 each carry phosphoserine. Over residues 35–51 (ASKHHYSRSRSRSRERK) the composition is skewed to basic residues. Over residues 66 to 111 (RSKEGRRHESKDKSSKKHKSEEHNDKEHSSDKGRERLNSSENGEDR) the composition is skewed to basic and acidic residues. Position 104 is a phosphoserine (serine 104). Over residues 112–214 (HKRKERKSSR…KRIEKPRRFS (103 aa)) the composition is skewed to basic residues. Positions 230 to 270 (NTAMDAQEALARRLERAKKLQEQREKEMVEKQKQQEIAAAA) form a coiled coil. Residue lysine 375 forms a Glycyl lysine isopeptide (Lys-Gly) (interchain with G-Cter in SUMO1); alternate linkage. A Glycyl lysine isopeptide (Lys-Gly) (interchain with G-Cter in SUMO2); alternate cross-link involves residue lysine 375. Serine 376 is modified (phosphoserine).

This sequence belongs to the RSRC2 family.

The protein is Arginine/serine-rich coiled-coil protein 2 (RSRC2) of Homo sapiens (Human).